A 171-amino-acid chain; its full sequence is 3-hydroxydecanoyl-[acyl-carrier-protein] dehydratase (171 aa).

The active site involves histidine 70.

This sequence belongs to the thioester dehydratase family. FabA subfamily. Homodimer.

Its subcellular location is the cytoplasm. It carries out the reaction a (3R)-hydroxyacyl-[ACP] = a (2E)-enoyl-[ACP] + H2O. The enzyme catalyses (3R)-hydroxydecanoyl-[ACP] = (2E)-decenoyl-[ACP] + H2O. It catalyses the reaction (2E)-decenoyl-[ACP] = (3Z)-decenoyl-[ACP]. It functions in the pathway lipid metabolism; fatty acid biosynthesis. In terms of biological role, necessary for the introduction of cis unsaturation into fatty acids. Catalyzes the dehydration of (3R)-3-hydroxydecanoyl-ACP to E-(2)-decenoyl-ACP and then its isomerization to Z-(3)-decenoyl-ACP. Can catalyze the dehydratase reaction for beta-hydroxyacyl-ACPs with saturated chain lengths up to 16:0, being most active on intermediate chain length. This Pseudomonas fluorescens (strain Pf0-1) protein is 3-hydroxydecanoyl-[acyl-carrier-protein] dehydratase.